We begin with the raw amino-acid sequence, 459 residues long: Bifunctional protein GlmU (459 aa).

Positions methionine 1 to arginine 230 are pyrophosphorylase. UDP-N-acetyl-alpha-D-glucosamine is bound by residues leucine 9–glycine 12, lysine 23, glutamine 73, and glycine 78–threonine 79. Aspartate 103 serves as a coordination point for Mg(2+). Positions 140, 155, 170, and 228 each coordinate UDP-N-acetyl-alpha-D-glucosamine. Asparagine 228 contacts Mg(2+). Residues valine 231 to asparagine 251 form a linker region. The interval glycine 252–serine 459 is N-acetyltransferase. Arginine 333 and lysine 351 together coordinate UDP-N-acetyl-alpha-D-glucosamine. Histidine 363 (proton acceptor) is an active-site residue. UDP-N-acetyl-alpha-D-glucosamine is bound by residues tyrosine 366 and asparagine 377. Acetyl-CoA contacts are provided by residues asparagine 386 to tyrosine 387, alanine 423, and arginine 440.

It in the N-terminal section; belongs to the N-acetylglucosamine-1-phosphate uridyltransferase family. The protein in the C-terminal section; belongs to the transferase hexapeptide repeat family. In terms of assembly, homotrimer. It depends on Mg(2+) as a cofactor.

It localises to the cytoplasm. The catalysed reaction is alpha-D-glucosamine 1-phosphate + acetyl-CoA = N-acetyl-alpha-D-glucosamine 1-phosphate + CoA + H(+). It catalyses the reaction N-acetyl-alpha-D-glucosamine 1-phosphate + UTP + H(+) = UDP-N-acetyl-alpha-D-glucosamine + diphosphate. It participates in nucleotide-sugar biosynthesis; UDP-N-acetyl-alpha-D-glucosamine biosynthesis; N-acetyl-alpha-D-glucosamine 1-phosphate from alpha-D-glucosamine 6-phosphate (route II): step 2/2. It functions in the pathway nucleotide-sugar biosynthesis; UDP-N-acetyl-alpha-D-glucosamine biosynthesis; UDP-N-acetyl-alpha-D-glucosamine from N-acetyl-alpha-D-glucosamine 1-phosphate: step 1/1. The protein operates within bacterial outer membrane biogenesis; LPS lipid A biosynthesis. Catalyzes the last two sequential reactions in the de novo biosynthetic pathway for UDP-N-acetylglucosamine (UDP-GlcNAc). The C-terminal domain catalyzes the transfer of acetyl group from acetyl coenzyme A to glucosamine-1-phosphate (GlcN-1-P) to produce N-acetylglucosamine-1-phosphate (GlcNAc-1-P), which is converted into UDP-GlcNAc by the transfer of uridine 5-monophosphate (from uridine 5-triphosphate), a reaction catalyzed by the N-terminal domain. The polypeptide is Bifunctional protein GlmU (Bacillus anthracis (strain A0248)).